The sequence spans 314 residues: Olfactory receptor 4Q2 (314 aa).

Residues 1 to 26 lie on the Extracellular side of the membrane; sequence MDKNQTEVMREFFLSGFSQTPSIEAG. The N-linked (GlcNAc...) asparagine glycan is linked to asparagine 4. The chain crosses the membrane as a helical span at residues 27–47; it reads LFVLFLFFYMSIWVGNVLIMV. Residues 48–61 are Cytoplasmic-facing; sequence TVASDKYLNSSPMY. Residues 62–84 form a helical membrane-spanning segment; that stretch reads FLLGNLSFLDLCYSTVTTPKLLA. The Extracellular portion of the chain corresponds to 85–98; the sequence is DFFNHEKLISYDQC. A disulfide bridge connects residues cysteine 98 and cysteine 181. A helical transmembrane segment spans residues 99–119; sequence IVQLFFLHFVGAAEMFLLTVM. Over 120–142 the chain is Cytoplasmic; the sequence is AYDRYVAICRPLHYTTVMSRGLC. A helical membrane pass occupies residues 143–163; sequence CVLVAASWMGGFVHSTVQTIL. Topologically, residues 164–196 are extracellular; sequence TVHLPFCGPNQVENTFFCDVPPVIKLACADTFV. Residues 197–217 form a helical membrane-spanning segment; it reads IELLMVSNSGLISTISFVVLI. The Cytoplasmic portion of the chain corresponds to 218–236; it reads SSYTTILVKIRSKEGRRKA. The helical transmembrane segment at 237–257 threads the bilayer; sequence LSTCASHLMVVTLFFGPCIFI. Over 258-268 the chain is Extracellular; that stretch reads YARPFSTFSVD. The chain crosses the membrane as a helical span at residues 269 to 289; sequence KMVSVLYNVITPMLNPLIYTL. Residues 290-314 are Cytoplasmic-facing; it reads RNKEVKSAMQKLWVRNGLTWKKQET.

Belongs to the G-protein coupled receptor 1 family.

It localises to the cell membrane. In terms of biological role, odorant receptor. This Homo sapiens (Human) protein is Olfactory receptor 4Q2 (OR4Q2).